Consider the following 157-residue polypeptide: MTKTVFVLNGPNLNLLGKREPGIYGVATLDDIEASCKREAGQLELQIDFRQSNHEGDLVSWIQEAGEKNAYVLINPAAYSHTSVAIHDAIRSARVTVVEVHLSNIHAREAFRHHSHVSAVTKGVICGFGAEGYLLGLRALAAIAKEEENNGQSIKGA.

The Proton acceptor role is filled by tyrosine 24. Residues asparagine 75, histidine 81, and aspartate 88 each contribute to the substrate site. Histidine 101 (proton donor) is an active-site residue. Substrate-binding positions include 102-103 (LS) and arginine 112.

The protein belongs to the type-II 3-dehydroquinase family. In terms of assembly, homododecamer.

It carries out the reaction 3-dehydroquinate = 3-dehydroshikimate + H2O. The protein operates within metabolic intermediate biosynthesis; chorismate biosynthesis; chorismate from D-erythrose 4-phosphate and phosphoenolpyruvate: step 3/7. Catalyzes a trans-dehydration via an enolate intermediate. This Brucella melitensis biotype 1 (strain ATCC 23456 / CCUG 17765 / NCTC 10094 / 16M) protein is 3-dehydroquinate dehydratase.